The following is a 195-amino-acid chain: Putative NADH dehydrogenase/NAD(P)H nitroreductase Bcep18194_B1060 (195 aa).

This sequence belongs to the nitroreductase family. HadB/RutE subfamily. The cofactor is FMN.

In Burkholderia lata (strain ATCC 17760 / DSM 23089 / LMG 22485 / NCIMB 9086 / R18194 / 383), this protein is Putative NADH dehydrogenase/NAD(P)H nitroreductase Bcep18194_B1060.